The chain runs to 192 residues: BREX protein BrxB (192 aa).

The protein belongs to the BrxB family.

In terms of biological role, BREX systems (bacteriophage exclusion) provide immunity against bacteriophage. Part of a type 1 BREX system. This system allows phage adsorption but prevents phage DNA replication, without degradation of the phage DNA. Methylation of bacterial DNA by PglX probably guides self/non-self discrimination. When the brxA-brxB-brxC-pglX and pglZ-brxL operons are transformed into a susceptible B.subtilis strain (BEST7003) they confer resistance to bacteriophages SPbeta, SP16, Zeta, phi3T and SP02 and partial protection to phages SP01 and SP82G (these include lytic and temperate phage). They do not protect against phages phi105, rho10 or rho14. Additionally confers a very slight reduction in efficiency of plasmid transformation. This Bacillus cereus (strain H3081.97) protein is BREX protein BrxB.